A 119-amino-acid polypeptide reads, in one-letter code: Succinate dehydrogenase assembly factor 2, mitochondrial (119 aa).

This sequence belongs to the SDHAF2 family. As to quaternary structure, interacts with the flavoprotein subunit within the SDH catalytic dimer.

It localises to the mitochondrion matrix. Functionally, plays an essential role in the assembly of succinate dehydrogenase (SDH), an enzyme complex (also referred to as respiratory complex II) that is a component of both the tricarboxylic acid (TCA) cycle and the mitochondrial electron transport chain, and which couples the oxidation of succinate to fumarate with the reduction of ubiquinone (coenzyme Q) to ubiquinol. Required for flavinylation (covalent attachment of FAD) of the flavoprotein subunit of the SDH catalytic dimer. The sequence is that of Succinate dehydrogenase assembly factor 2, mitochondrial from Caenorhabditis elegans.